The chain runs to 437 residues: Na(+)/H(+) antiporter NhaA (437 aa).

Transmembrane regions (helical) follow at residues 12-32 (SMNITASILLFVTAIAAAVIA), 65-85 (LTMIEFINDGLMTIFFLMVGL), 103-123 (ALPFIAACGGMVVPVVIYSMV), 133-153 (GLAIPMATDIAFSLGVLSLLG), 162-182 (IFLTAFAVVDDIGGILVIAIF), 186-206 (HVAYEYLLWAALLYVLLYFIG), 214-234 (IFFLVVGVVIWYLFLQSGIHS), 308-328 (GAVNYLVLPLFAFVNAGVMFS), 333-353 (VIGGVTLAVALGLLAGKFLGI), 377-397 (ISGVALLGGIGFTVSLFIANL), and 412-432 (LGVLSGTVMAGILGYLVLHWV).

It belongs to the NhaA Na(+)/H(+) (TC 2.A.33) antiporter family.

Its subcellular location is the cell inner membrane. The catalysed reaction is Na(+)(in) + 2 H(+)(out) = Na(+)(out) + 2 H(+)(in). Na(+)/H(+) antiporter that extrudes sodium in exchange for external protons. The protein is Na(+)/H(+) antiporter NhaA of Bacteroides fragilis (strain ATCC 25285 / DSM 2151 / CCUG 4856 / JCM 11019 / LMG 10263 / NCTC 9343 / Onslow / VPI 2553 / EN-2).